A 245-amino-acid chain; its full sequence is CX3CL1-binding protein 2 (245 aa).

A signal peptide spans 1–25 (MSFCYVRTISIALFLFIFLFLNNGN). Residues 26–164 (FKNNFYRKDN…LHFNNVRAAT (139 aa)) are Cytoplasmic-facing. The tract at residues 46–50 (RSLAE) is PEXEL motif. The interval 52–71 (QKVETEQSTPAKPEPTEFVN) is disordered. The helical transmembrane segment at 165-185 (IIFIAGFLSIFAILLTISAVA) threads the bilayer. The Extracellular portion of the chain corresponds to 186-196 (ATSKFTNNMLA). Residues 197 to 217 (IAGVGALGSALSLPGMALLFV) form a helical membrane-spanning segment. At 218–245 (PAMLYVLNRKNEITNHYSERIIKQVSNF) the chain is on the cytoplasmic side.

In terms of assembly, monomer. May form (via the first cytoplasmic domain) homodimers or homotrimers; disulfide-linked. Interacts with MAHRP1. May interact (via first cytoplasmic domain) with SBP1; the interaction is likely to occur at the ring stage in the Maurer's clefts and is weaken by ATP. Interacts (via extracellular domain) with human chemokine CX3CL1; the interaction mediates the adhesion of infected erythrocytes with endothelial cells.

The protein localises to the host cell membrane. In terms of biological role, during the asexual blood stage and probably at the ring/trophozoite stages, plays a role in Maurer's cleft formation and/or morphology. Also, involved in the loading of the virulence factor EMP1 into the Maurer's cleft membrane. By binding to host chemokine CX3CL1, mediates the cytoadherence of host erythrocytes infected with parasite mature forms (late trophozoite and schizont) to endothelial cells, which sequesters them away from the circulation and thus prevents their elimination by the host spleen. The protein is CX3CL1-binding protein 2 of Plasmodium falciparum (isolate 3D7).